We begin with the raw amino-acid sequence, 202 residues long: Pyridoxal 5'-phosphate synthase subunit PdxT (202 aa).

An L-glutamine-binding site is contributed by 49–51 (GES). Catalysis depends on cysteine 81, which acts as the Nucleophile. Residues arginine 110 and 139 to 140 (IR) each bind L-glutamine. Active-site charge relay system residues include histidine 182 and glutamate 184.

The protein belongs to the glutaminase PdxT/SNO family. In the presence of PdxS, forms a dodecamer of heterodimers. Only shows activity in the heterodimer.

It catalyses the reaction aldehydo-D-ribose 5-phosphate + D-glyceraldehyde 3-phosphate + L-glutamine = pyridoxal 5'-phosphate + L-glutamate + phosphate + 3 H2O + H(+). It carries out the reaction L-glutamine + H2O = L-glutamate + NH4(+). The protein operates within cofactor biosynthesis; pyridoxal 5'-phosphate biosynthesis. In terms of biological role, catalyzes the hydrolysis of glutamine to glutamate and ammonia as part of the biosynthesis of pyridoxal 5'-phosphate. The resulting ammonia molecule is channeled to the active site of PdxS. This chain is Pyridoxal 5'-phosphate synthase subunit PdxT, found in Rhodococcus jostii (strain RHA1).